The sequence spans 231 residues: MIYLRKANERGHANHGWLDSWHTFSFANYYDPNFMGFSALRVINDDVIEAGQGFGTHPHKDMEILTYVLEGTVEHQDSMGNKEQVPAGEFQIMSAGTGIRHSEYNPSSTERLHLYQIWIMPEENGITPRYEQRRFDAVQGKQLVLSPDARDGSLKVHQDMELYRWALLKDEQSVHQIAAERRVWIQVVKGNVTINGVKASISDGLAIWDEQAISIHADSDSEVLLFDLPPV.

Histidine 57, histidine 59, histidine 101, and glutamate 103 together coordinate a divalent metal cation.

It belongs to the pirin family. Zn(2+) is required as a cofactor. Co(2+) serves as cofactor. It depends on Fe(2+) as a cofactor.

It catalyses the reaction quercetin + O2 = 2-(3,4-dihydroxybenzoyloxy)-4,6-dihydroxybenzoate + CO. It functions in the pathway flavonoid metabolism; quercetin degradation. In terms of biological role, has quercetin 2,3-dioxygenase activity in vitro. Its physiological role is unknown; however, may provide a mechanism that would avoid inhibition of key cellular proteins, such as DNA gyrase, by quercetin. The chain is Quercetin 2,3-dioxygenase (yhhW) from Escherichia coli O157:H7.